The primary structure comprises 202 residues: Putative pituitary tumor-transforming gene 3 protein (202 aa).

Residues 61–64 (RKAL) carry the D-box motif. The short motif at 163-173 (PPSPLKMPSPP) is the SH3-binding element.

The protein belongs to the securin family.

It localises to the cytoplasm. The protein localises to the nucleus. In Pan troglodytes (Chimpanzee), this protein is Putative pituitary tumor-transforming gene 3 protein (PTTG3).